The following is a 215-amino-acid chain: MLDMKRNRERMVKQQLETRGITDPAVLAAMRSVPRHLFVQEALRAQAYEDHPLPIGYGQTISQPFIVALMSQIIEPQPGLRVLEIGTGSGYQAAVLAEMGLDVYTVERIRELHAAARDLLRTLKYRKVRLKLDDGTLGWPEAAPYDRILVTAGGPEVPLPLIEQLADPGIMVIPVGASKRMQELVVVRKQGGRVVRESKGGVAFVDLVGTHGWRG.

S62 is a catalytic residue.

This sequence belongs to the methyltransferase superfamily. L-isoaspartyl/D-aspartyl protein methyltransferase family.

The protein localises to the cytoplasm. It catalyses the reaction [protein]-L-isoaspartate + S-adenosyl-L-methionine = [protein]-L-isoaspartate alpha-methyl ester + S-adenosyl-L-homocysteine. In terms of biological role, catalyzes the methyl esterification of L-isoaspartyl residues in peptides and proteins that result from spontaneous decomposition of normal L-aspartyl and L-asparaginyl residues. It plays a role in the repair and/or degradation of damaged proteins. The sequence is that of Protein-L-isoaspartate O-methyltransferase from Nitratidesulfovibrio vulgaris (strain DSM 19637 / Miyazaki F) (Desulfovibrio vulgaris).